The sequence spans 223 residues: Phosphoribosylformylglycinamidine synthase subunit PurQ (223 aa).

Positions 4–223 (KIGVITFPGT…FLSAIGTIAA (220 aa)) constitute a Glutamine amidotransferase type-1 domain. Cysteine 87 functions as the Nucleophile in the catalytic mechanism. Residues histidine 195 and glutamate 197 contribute to the active site.

Part of the FGAM synthase complex composed of 1 PurL, 1 PurQ and 2 PurS subunits.

Its subcellular location is the cytoplasm. The catalysed reaction is N(2)-formyl-N(1)-(5-phospho-beta-D-ribosyl)glycinamide + L-glutamine + ATP + H2O = 2-formamido-N(1)-(5-O-phospho-beta-D-ribosyl)acetamidine + L-glutamate + ADP + phosphate + H(+). The enzyme catalyses L-glutamine + H2O = L-glutamate + NH4(+). Its pathway is purine metabolism; IMP biosynthesis via de novo pathway; 5-amino-1-(5-phospho-D-ribosyl)imidazole from N(2)-formyl-N(1)-(5-phospho-D-ribosyl)glycinamide: step 1/2. Its function is as follows. Part of the phosphoribosylformylglycinamidine synthase complex involved in the purines biosynthetic pathway. Catalyzes the ATP-dependent conversion of formylglycinamide ribonucleotide (FGAR) and glutamine to yield formylglycinamidine ribonucleotide (FGAM) and glutamate. The FGAM synthase complex is composed of three subunits. PurQ produces an ammonia molecule by converting glutamine to glutamate. PurL transfers the ammonia molecule to FGAR to form FGAM in an ATP-dependent manner. PurS interacts with PurQ and PurL and is thought to assist in the transfer of the ammonia molecule from PurQ to PurL. This chain is Phosphoribosylformylglycinamidine synthase subunit PurQ, found in Corynebacterium efficiens (strain DSM 44549 / YS-314 / AJ 12310 / JCM 11189 / NBRC 100395).